The chain runs to 74 residues: Small cysteine-rich protein 8 (74 aa).

Residues 1-21 (MAAKFHLCLLLIILGTITVQG) form the signal peptide. The propeptide occupies 22 to 31 (ARHPGKPHFF).

The protein belongs to the Cnidaria small cysteine-rich protein (SCRiP) family. beta subfamily. Post-translationally, contains 4 disulfide bonds.

It localises to the secreted. The protein resides in the nematocyst. In terms of biological role, induces neurotoxic symptoms on zebrafish. Has also been claimed to be implied in calcification, but tests on homolog proteins suggest that proteins of this family have a neurotoxic function and not a calcification function. The sequence is that of Small cysteine-rich protein 8 from Orbicella faveolata (Mountainous star coral).